A 331-amino-acid chain; its full sequence is Homeobox protein DBX1 (331 aa).

2 disordered regions span residues 56–94 (RAVP…ISSN) and 232–331 (KERE…ITVS). The homeobox DNA-binding region spans 173–232 (GMLRRAVFSDVQRKALEKMFQKQKYISKPDRKKLAGKLGLKDSQVKIWFQNRRMKWRNSK). Residues 256 to 266 (DLSDVSKKSSG) are compositionally biased toward basic and acidic residues. A compositionally biased stretch (low complexity) spans 299-314 (PSSPFNSSSASKPSDF). The segment covering 315–331 (SDSEEEGGEQEEEITVS) has biased composition (acidic residues).

The protein belongs to the H2.0 homeobox family.

It localises to the nucleus. Functionally, may function within the midpoint progenitor population to inhibit neuronal differentiation, possibly through modulating the function of Xash3. This Xenopus laevis (African clawed frog) protein is Homeobox protein DBX1 (dbx1).